The primary structure comprises 2346 residues: Acetyl-CoA carboxylase 1 (2346 aa).

Position 1 is an N-acetylmethionine (methionine 1). Residues serine 5, serine 23, serine 25, serine 29, serine 34, serine 48, serine 50, and serine 53 each carry the phosphoserine modification. Threonine 58 bears the Phosphothreonine mark. Serine 78 carries the post-translational modification Phosphoserine. Serine 80 carries the post-translational modification Phosphoserine; by AMPK. A Biotin carboxylation domain is found at 117 to 618; the sequence is VIEKVLIANN…GTGWLDRLIA (502 aa). An ATP-grasp domain is found at 275-466; that stretch reads SKRILNVPQE…LPAAQLQIAM (192 aa). 315–320 provides a ligand contact to ATP; it reads GGGGKG. Mg(2+) contacts are provided by glutamate 424, glutamate 437, and asparagine 439. Mn(2+) contacts are provided by glutamate 424, glutamate 437, and asparagine 439. Arginine 441 is a catalytic residue. Phosphothreonine is present on threonine 610. In terms of domain architecture, Biotinyl-binding spans 745-819; the sequence is FEKENDPSVL…DPGCVIAKMQ (75 aa). Residue lysine 786 is modified to N6-biotinyllysine. 4 positions are modified to phosphoserine: serine 835, serine 1201, serine 1216, and serine 1218. Phosphothreonine is present on threonine 1227. Residues serine 1259, serine 1263, and serine 1273 each carry the phosphoserine modification. Lysine 1334 is subject to N6-acetyllysine. One can recognise a CoA carboxyltransferase N-terminal domain in the interval 1576-1914; the sequence is PYVTKDQLQS…SVYSSVPLLN (339 aa). The tract at residues 1576–2234 is carboxyltransferase; sequence PYVTKDQLQS…EDLVKKKIHN (659 aa). Arginine 1823, lysine 2127, and arginine 2129 together coordinate CoA. A CoA carboxyltransferase C-terminal domain is found at 1918 to 2234; it reads PIDRVIEFVP…EDLVKKKIHN (317 aa). Threonine 2153 carries the post-translational modification Phosphothreonine.

As to quaternary structure, monomer, homodimer, and homotetramer. Can form filamentous polymers. Interacts in its inactive phosphorylated form with the BRCT domains of BRCA1 which prevents ACACA dephosphorylation and inhibits lipid synthesis. Interacts with MID1IP1; interaction with MID1IP1 promotes oligomerization and increases its activity. The cofactor is Mg(2+). Mn(2+) serves as cofactor. Requires biotin as cofactor. Phosphorylation on Ser-1263 is required for interaction with BRCA1. In terms of processing, phosphorylation at Ser-80 by AMPK inactivates enzyme activity. Post-translationally, the biotin cofactor is covalently attached to the central biotinyl-binding domain and is required for the catalytic activity.

The protein localises to the cytoplasm. It localises to the cytosol. The catalysed reaction is hydrogencarbonate + acetyl-CoA + ATP = malonyl-CoA + ADP + phosphate + H(+). The protein operates within lipid metabolism; malonyl-CoA biosynthesis; malonyl-CoA from acetyl-CoA: step 1/1. Its activity is regulated as follows. Inhibited by phosphorylation. Citrate promotes oligomerization of the protein into filaments that correspond to the most active form of the carboxylase. Cytosolic enzyme that catalyzes the carboxylation of acetyl-CoA to malonyl-CoA, the first and rate-limiting step of de novo fatty acid biosynthesis. This is a 2 steps reaction starting with the ATP-dependent carboxylation of the biotin carried by the biotin carboxyl carrier (BCC) domain followed by the transfer of the carboxyl group from carboxylated biotin to acetyl-CoA. This is Acetyl-CoA carboxylase 1 from Bos taurus (Bovine).